The primary structure comprises 231 residues: MSDTAASMPYPVITIDGPTASGKGTVAHQIADLLGFHLLDSGSLYRLVALASMRENIDDHDVESLVRIARELDVRFKADRIWLKGEDVSLALRHESVGNQASAIAVHGAVREALHARQRAFLEAPGLVADGRDMGTVVFPEAVLKVFLTASVQARAERRYKQLIAKGFSATVESLSQDLEARDLRDRTRSVAPLRPAQDARQLDSSDMTVDEVVAQVLDWYRQVQGANKAN.

An ATP-binding site is contributed by 17 to 25 (GPTASGKGT).

The protein belongs to the cytidylate kinase family. Type 1 subfamily.

Its subcellular location is the cytoplasm. It catalyses the reaction CMP + ATP = CDP + ADP. The enzyme catalyses dCMP + ATP = dCDP + ADP. This Ralstonia pickettii (strain 12J) protein is Cytidylate kinase.